Consider the following 208-residue polypeptide: Small ribosomal subunit protein uS4 (208 aa).

The 63-residue stretch at 98–160 (RRIDNTVYRL…SRQLQMINEA (63 aa)) folds into the S4 RNA-binding domain.

Belongs to the universal ribosomal protein uS4 family. In terms of assembly, part of the 30S ribosomal subunit. Contacts protein S5. The interaction surface between S4 and S5 is involved in control of translational fidelity.

One of the primary rRNA binding proteins, it binds directly to 16S rRNA where it nucleates assembly of the body of the 30S subunit. In terms of biological role, with S5 and S12 plays an important role in translational accuracy. The polypeptide is Small ribosomal subunit protein uS4 (Syntrophobacter fumaroxidans (strain DSM 10017 / MPOB)).